We begin with the raw amino-acid sequence, 466 residues long: Soluble pyridine nucleotide transhydrogenase (466 aa).

Position 36-45 (36-45 (ERYQNVGGGC)) interacts with FAD.

It belongs to the class-I pyridine nucleotide-disulfide oxidoreductase family. FAD serves as cofactor.

It localises to the cytoplasm. The catalysed reaction is NAD(+) + NADPH = NADH + NADP(+). Its function is as follows. Conversion of NADPH, generated by peripheral catabolic pathways, to NADH, which can enter the respiratory chain for energy generation. The protein is Soluble pyridine nucleotide transhydrogenase of Escherichia coli O9:H4 (strain HS).